The chain runs to 69 residues: MFTLKKTLLLLYFLGTISISLCKQERDADEDDGRKMTEEEVKRSIITMTKEAKLPQSWKQIACRLYNTC.

The N-terminal stretch at 1-22 (MFTLKKTLLLLYFLGTISISLC) is a signal peptide. The propeptide occupies 23–43 (KQERDADEDDGRKMTEEEVKR). C63 and C69 form a disulfide bridge.

As to expression, expressed by the skin glands.

It is found in the secreted. In terms of biological role, antimicrobial peptide. Has activity against the Gram-positive bacterium S.aureus ATCC2592 (MIC=15 ug/ml), the Gram-negative bacteria E.coli ATCC25922 (MIC=60 ug/ml), B.dysenteriae (MIC=60 ug/ml), H.pylori NTCT11637 (MIC=30 ug/ml), and the fungus C.albicans ATCC2002 (MIC=30 ug/ml). Has little hemolytic activity on rabbit red blood cells. The polypeptide is Pleurain-A2 (Nidirana pleuraden (Yunnan pond frog)).